Reading from the N-terminus, the 243-residue chain is LexA repressor 2 (243 aa).

The segment at residues 48 to 68 (IREIGDAVGLTSTSSVAHQLR) is a DNA-binding region (H-T-H motif). Active-site for autocatalytic cleavage activity residues include Ser167 and Lys204.

The protein belongs to the peptidase S24 family. In terms of assembly, homodimer.

It catalyses the reaction Hydrolysis of Ala-|-Gly bond in repressor LexA.. In terms of biological role, represses a number of genes involved in the response to DNA damage (SOS response), including recA and lexA. In the presence of single-stranded DNA, RecA interacts with LexA causing an autocatalytic cleavage which disrupts the DNA-binding part of LexA, leading to derepression of the SOS regulon and eventually DNA repair. The sequence is that of LexA repressor 2 from Nocardia farcinica (strain IFM 10152).